A 182-amino-acid polypeptide reads, in one-letter code: Adenine phosphoribosyltransferase (182 aa).

This sequence belongs to the purine/pyrimidine phosphoribosyltransferase family. In terms of assembly, homodimer.

The protein resides in the cytoplasm. The enzyme catalyses AMP + diphosphate = 5-phospho-alpha-D-ribose 1-diphosphate + adenine. The protein operates within purine metabolism; AMP biosynthesis via salvage pathway; AMP from adenine: step 1/1. Functionally, catalyzes a salvage reaction resulting in the formation of AMP, that is energically less costly than de novo synthesis. This is Adenine phosphoribosyltransferase from Pseudomonas syringae pv. tomato (strain ATCC BAA-871 / DC3000).